A 665-amino-acid chain; its full sequence is Syntabulin (665 aa).

Over residues 1-22 (MGPLRESKKEQRVQHQEKEISR) the composition is skewed to basic and acidic residues. Positions 1–271 (MGPLRESKKE…GVKPPNPEQY (271 aa)) are disordered. The tract at residues 2-421 (GPLRESKKEQ…DKLPDGLSLE (420 aa)) is sufficient for interaction with KIF5B. Positions 35–52 (PQQQQQQQNKVSPASESP) are enriched in low complexity. S54 is subject to Phosphoserine. Positions 61–77 (FNPSSSGRSARTISSNS) are enriched in low complexity. The segment covering 85 to 101 (CPSSQSVSPVKTPSDTG) has biased composition (polar residues). S111 carries the post-translational modification Phosphoserine. Positions 141–162 (GGIIKPGSEADFSSSSSTGSIS) are enriched in low complexity. Polar residues predominate over residues 168 to 180 (MSTTGNKRASFSR). Over residues 225 to 245 (SYAPSSPSSSNSGSYKGSDCS) the composition is skewed to low complexity. Positions 275–357 (LQQKEVTVRH…MRSSLADKDK (83 aa)) form a coiled coil. Positions 314–421 (REDWIEEECH…DKLPDGLSLE (108 aa)) are sufficient for interaction with STX1A. Phosphoserine is present on residues S400 and S557. A helical membrane pass occupies residues 609–629 (FLVDLLAVAAPVVPTVLWAFS).

Interacts with STX1A and KIF5B.

It localises to the golgi apparatus membrane. Part of a kinesin motor-adapter complex that is critical for the anterograde axonal transport of active zone components and contributes to activity-dependent presynaptic assembly during neuronal development. The polypeptide is Syntabulin (Sybu) (Mus musculus (Mouse)).